Reading from the N-terminus, the 545-residue chain is Chaperonin GroEL (545 aa).

Residues 29-32, Lys-50, 86-90, Gly-415, and Asp-495 contribute to the ATP site; these read TLGP and DGTTT.

The protein belongs to the chaperonin (HSP60) family. Forms a cylinder of 14 subunits composed of two heptameric rings stacked back-to-back. Interacts with the co-chaperonin GroES.

It is found in the cytoplasm. The enzyme catalyses ATP + H2O + a folded polypeptide = ADP + phosphate + an unfolded polypeptide.. Its function is as follows. Together with its co-chaperonin GroES, plays an essential role in assisting protein folding. The GroEL-GroES system forms a nano-cage that allows encapsulation of the non-native substrate proteins and provides a physical environment optimized to promote and accelerate protein folding. The sequence is that of Chaperonin GroEL from Bacteroides thetaiotaomicron (strain ATCC 29148 / DSM 2079 / JCM 5827 / CCUG 10774 / NCTC 10582 / VPI-5482 / E50).